Reading from the N-terminus, the 804-residue chain is Leucine--tRNA ligase (804 aa).

Positions Pro-40–His-51 match the 'HIGH' region motif. Residues Lys-576 to Ser-580 carry the 'KMSKS' region motif. Lys-579 serves as a coordination point for ATP.

It belongs to the class-I aminoacyl-tRNA synthetase family.

It is found in the cytoplasm. The catalysed reaction is tRNA(Leu) + L-leucine + ATP = L-leucyl-tRNA(Leu) + AMP + diphosphate. This is Leucine--tRNA ligase from Staphylococcus epidermidis (strain ATCC 35984 / DSM 28319 / BCRC 17069 / CCUG 31568 / BM 3577 / RP62A).